Reading from the N-terminus, the 300-residue chain is NAD kinase (300 aa).

Catalysis depends on D75, which acts as the Proton acceptor. Residues 75 to 76 (DG), 149 to 150 (ND), R177, D179, 190 to 195 (TAYALS), A214, and Q248 contribute to the NAD(+) site.

This sequence belongs to the NAD kinase family. Requires a divalent metal cation as cofactor.

It localises to the cytoplasm. The enzyme catalyses NAD(+) + ATP = ADP + NADP(+) + H(+). Functionally, involved in the regulation of the intracellular balance of NAD and NADP, and is a key enzyme in the biosynthesis of NADP. Catalyzes specifically the phosphorylation on 2'-hydroxyl of the adenosine moiety of NAD to yield NADP. The sequence is that of NAD kinase from Burkholderia multivorans (strain ATCC 17616 / 249).